Consider the following 255-residue polypeptide: Aliphatic sulfonates import ATP-binding protein SsuB (255 aa).

The ABC transporter domain maps to leucine 12–leucine 233. ATP is bound at residue glycine 44–serine 51.

Belongs to the ABC transporter superfamily. Aliphatic sulfonates importer (TC 3.A.1.17.2) family. As to quaternary structure, the complex is composed of two ATP-binding proteins (SsuB), two transmembrane proteins (SsuC) and a solute-binding protein (SsuA).

Its subcellular location is the cell inner membrane. The catalysed reaction is ATP + H2O + aliphatic sulfonate-[sulfonate-binding protein]Side 1 = ADP + phosphate + aliphatic sulfonateSide 2 + [sulfonate-binding protein]Side 1.. In terms of biological role, part of the ABC transporter complex SsuABC involved in aliphatic sulfonates import. Responsible for energy coupling to the transport system. The sequence is that of Aliphatic sulfonates import ATP-binding protein SsuB from Escherichia coli O1:K1 / APEC.